The following is a 74-amino-acid chain: MKRQKRDQTERAFVKGYQAGIEGRSKSLCPHESGLARQQWLNGWRESRMDQWDGYSRLAQVQKITNLHPMSMSG.

The protein belongs to the ribosome modulation factor family.

It is found in the cytoplasm. In terms of biological role, during stationary phase, converts 70S ribosomes to an inactive dimeric form (100S ribosomes). This is Ribosome modulation factor from Cellvibrio japonicus (strain Ueda107) (Pseudomonas fluorescens subsp. cellulosa).